The primary structure comprises 209 residues: Probable glutathione peroxidase 8 (209 aa).

M1 carries the N-acetylmethionine modification. Residues 18-40 (VFAVLLSIVLCTVTLFLLQLKFL) form a helical membrane-spanning segment. C79 is a catalytic residue.

This sequence belongs to the glutathione peroxidase family.

It localises to the membrane. It carries out the reaction 2 glutathione + H2O2 = glutathione disulfide + 2 H2O. In Homo sapiens (Human), this protein is Probable glutathione peroxidase 8 (GPX8).